Reading from the N-terminus, the 528-residue chain is Phosphoenolpyruvate carboxykinase (ATP) (528 aa).

Substrate contacts are provided by arginine 56, tyrosine 192, and lysine 198. ATP contacts are provided by residues lysine 198, histidine 217, and glycine 233–threonine 241. Positions 198 and 217 each coordinate Mn(2+). A Mn(2+)-binding site is contributed by aspartate 254. Positions 282, 319, and 444 each coordinate ATP. Substrate is bound at residue arginine 319.

It belongs to the phosphoenolpyruvate carboxykinase (ATP) family. Mn(2+) is required as a cofactor.

The protein resides in the cytoplasm. The catalysed reaction is oxaloacetate + ATP = phosphoenolpyruvate + ADP + CO2. The protein operates within carbohydrate biosynthesis; gluconeogenesis. Involved in the gluconeogenesis. Catalyzes the conversion of oxaloacetate (OAA) to phosphoenolpyruvate (PEP) through direct phosphoryl transfer between the nucleoside triphosphate and OAA. The sequence is that of Phosphoenolpyruvate carboxykinase (ATP) from Bacillus cereus (strain B4264).